A 173-amino-acid polypeptide reads, in one-letter code: Ribosome maturation factor RimM (173 aa).

The PRC barrel domain occupies 95 to 169 (PDEFYDHELE…TIVIDPPEGL (75 aa)).

Belongs to the RimM family. Binds ribosomal protein uS19.

It localises to the cytoplasm. An accessory protein needed during the final step in the assembly of 30S ribosomal subunit, possibly for assembly of the head region. Essential for efficient processing of 16S rRNA. May be needed both before and after RbfA during the maturation of 16S rRNA. It has affinity for free ribosomal 30S subunits but not for 70S ribosomes. This is Ribosome maturation factor RimM from Mycolicibacterium smegmatis (strain ATCC 700084 / mc(2)155) (Mycobacterium smegmatis).